The sequence spans 239 residues: 1-(5-phosphoribosyl)-5-[(5-phosphoribosylamino)methylideneamino] imidazole-4-carboxamide isomerase (239 aa).

Asp9 functions as the Proton acceptor in the catalytic mechanism. Asp131 functions as the Proton donor in the catalytic mechanism.

Belongs to the HisA/HisF family.

It localises to the cytoplasm. The enzyme catalyses 1-(5-phospho-beta-D-ribosyl)-5-[(5-phospho-beta-D-ribosylamino)methylideneamino]imidazole-4-carboxamide = 5-[(5-phospho-1-deoxy-D-ribulos-1-ylimino)methylamino]-1-(5-phospho-beta-D-ribosyl)imidazole-4-carboxamide. It functions in the pathway amino-acid biosynthesis; L-histidine biosynthesis; L-histidine from 5-phospho-alpha-D-ribose 1-diphosphate: step 4/9. This chain is 1-(5-phosphoribosyl)-5-[(5-phosphoribosylamino)methylideneamino] imidazole-4-carboxamide isomerase, found in Bacteroides fragilis (strain YCH46).